Consider the following 313-residue polypeptide: Competence protein ComGA (313 aa).

138–145 contributes to the ATP binding site; that stretch reads GPVGSGKT.

The protein belongs to the GSP E family.

Its subcellular location is the cell membrane. In terms of biological role, required for uptake of DNA by competent cells. May be involved in assembly of a complex forming a transformation pilus at the surface of competent cells. The sequence is that of Competence protein ComGA from Streptococcus pneumoniae (strain ATCC BAA-255 / R6).